The primary structure comprises 497 residues: Glutamate--tRNA ligase (497 aa).

Positions 13–23 (PSPTGTPHVGM) match the 'HIGH' region motif. Residues 257–261 (KLSKR) carry the 'KMSKS' region motif. Position 260 (Lys260) interacts with ATP.

Belongs to the class-I aminoacyl-tRNA synthetase family. Glutamate--tRNA ligase type 1 subfamily. In terms of assembly, monomer.

Its subcellular location is the cytoplasm. The enzyme catalyses tRNA(Glu) + L-glutamate + ATP = L-glutamyl-tRNA(Glu) + AMP + diphosphate. Catalyzes the attachment of glutamate to tRNA(Glu) in a two-step reaction: glutamate is first activated by ATP to form Glu-AMP and then transferred to the acceptor end of tRNA(Glu). This chain is Glutamate--tRNA ligase, found in Corynebacterium diphtheriae (strain ATCC 700971 / NCTC 13129 / Biotype gravis).